The following is a 489-amino-acid chain: 3-octaprenyl-4-hydroxybenzoate carboxy-lyase (489 aa).

N172 is a binding site for Mn(2+). Prenylated FMN-binding positions include 175-177, 189-191, and 194-195; these read IYR, RWL, and RG. A Mn(2+)-binding site is contributed by E238. The active-site Proton donor is D287.

It belongs to the UbiD family. As to quaternary structure, homohexamer. The cofactor is prenylated FMN. Requires Mn(2+) as cofactor.

It localises to the cell membrane. It catalyses the reaction a 4-hydroxy-3-(all-trans-polyprenyl)benzoate + H(+) = a 2-(all-trans-polyprenyl)phenol + CO2. It functions in the pathway cofactor biosynthesis; ubiquinone biosynthesis. Its function is as follows. Catalyzes the decarboxylation of 3-octaprenyl-4-hydroxy benzoate to 2-octaprenylphenol, an intermediate step in ubiquinone biosynthesis. The sequence is that of 3-octaprenyl-4-hydroxybenzoate carboxy-lyase from Klebsiella pneumoniae (strain 342).